The sequence spans 556 residues: Copine-7 (556 aa).

2 consecutive C2 domains span residues 1–128 and 135–262; these read MSGD…TRPL and NAGK…AQWD. Ca(2+)-binding residues include Asp-168, Asp-174, Asp-230, Asp-232, and Asp-238. Positions 305–504 constitute a VWFA domain; that stretch reads HCTVAIDFTA…PALRDIVQFV (200 aa). The tract at residues 536-556 is disordered; it reads KDLPPRSLGGQTGEAGPSSAP.

Belongs to the copine family. It depends on Ca(2+) as a cofactor.

It localises to the cytoplasm. The protein resides in the nucleus. It is found in the cell membrane. Its function is as follows. Calcium-dependent phospholipid-binding protein that may play a role in calcium-mediated intracellular processes. The chain is Copine-7 from Rattus norvegicus (Rat).